Here is a 61-residue protein sequence, read N- to C-terminus: Large ribosomal subunit protein bL32 (61 aa).

Residues 1 to 16 (MAVPKRKTSPSKRGMR) are compositionally biased toward basic residues. Residues 1–33 (MAVPKRKTSPSKRGMRRSADGLKAPTYVEDKNS) form a disordered region.

Belongs to the bacterial ribosomal protein bL32 family.

The chain is Large ribosomal subunit protein bL32 from Allorhizobium ampelinum (strain ATCC BAA-846 / DSM 112012 / S4) (Agrobacterium vitis (strain S4)).